We begin with the raw amino-acid sequence, 333 residues long: Outer membrane protein assembly factor BamC (333 aa).

Residues 1–18 (MKKCLFPLSVLAVIVATG) form the signal peptide. Residue C19 is the site of N-palmitoyl cysteine attachment. A lipid anchor (S-diacylglycerol cysteine) is attached at C19.

Belongs to the BamC family. Part of the Bam complex.

The protein resides in the cell outer membrane. Part of the outer membrane protein assembly complex, which is involved in assembly and insertion of beta-barrel proteins into the outer membrane. This chain is Outer membrane protein assembly factor BamC, found in Actinobacillus succinogenes (strain ATCC 55618 / DSM 22257 / CCUG 43843 / 130Z).